The chain runs to 375 residues: Trichodiene synthase (375 aa).

The protein belongs to the trichodiene synthase family.

It carries out the reaction (2E,6E)-farnesyl diphosphate = trichodiene + diphosphate. Its pathway is sesquiterpene biosynthesis; trichothecene biosynthesis. In terms of biological role, TS is a member of the terpene cyclase group of enzymes. It catalyzes the isomerization and cyclization of farnesyl pyro-phosphate to form trichodiene, the first cyclic intermediate in the biosynthetic pathway for trichothecenes. It serves to branch trichothecene biosynthesis from the isoprenoid pathway. The polypeptide is Trichodiene synthase (TRI5) (Fusarium asiaticum).